The sequence spans 216 residues: Ras-related protein RABE1a (216 aa).

Gly-22–Ser-29 serves as a coordination point for GTP. Residues Phe-44–Phe-52 carry the Effector region motif. GTP contacts are provided by residues Asp-70–Gln-74, Asn-128–Asp-131, and Ser-159–Ala-160. The disordered stretch occupies residues Asp-185–Thr-216. Residues Ile-193–Thr-216 are compositionally biased toward polar residues. 2 S-geranylgeranyl cysteine lipidation sites follow: Cys-213 and Cys-214.

This sequence belongs to the small GTPase superfamily. Rab family. As to quaternary structure, interacts with PI5K2.

The protein localises to the golgi apparatus membrane. It localises to the cell membrane. Functionally, involved in membrane trafficking from the Golgi to the plasma membrane. The sequence is that of Ras-related protein RABE1a (RABE1A) from Arabidopsis thaliana (Mouse-ear cress).